The primary structure comprises 576 residues: MGGGGNLVDGVRRWLFFQRRPSSSSSSNNHDQIQNPPTVSNPNDDEDLKKLTDPSKLRQIKVQQRNHLPMEKKGIPNAEFFTEYGEANRYQIQEVVGKGSYGVVGSAIDTHTGERVAIKKINDVFDHISDATRILREIKLLRLLLHPDVVEIKHIMLPPSRREFRDVYVVFELMESDLHQVIKANDDLTPEHHQFFLYQLLRGLKYVHAANVFHRDLKPKNILANADCKLKICDFGLARVSFNDAPTAIFWTDYVATRWYRAPELCGSFFSKYTPAIDIWSVGCIFAEMLLGKPLFPGKNVVHQLDIMTDFLGTPPPEAISKIRNDKARRYLGNMRKKQPVPFSKKFPKADPSALRLLERLIAFDPKDRPSAEEALADPYFNGLSSKVREPSTQPISKLEFEFERKKLTKDDIRELIYREILEYHPQMLEEYLRGGNQLSFMYPSGVDRFRRQFAHLEENQGPGGRSNALQRQHASLPRERVPASKNETVEERSNDIERRTTAAVASTLDSPKASQQAEGTENGGGGGYSARNLMKSSSISGSKCIGVQSKTNIEDSIVEEQDETVAVKVASLHNS.

The tract at residues 20-50 is disordered; the sequence is RPSSSSSSNNHDQIQNPPTVSNPNDDEDLKK. Residues 28–42 show a composition bias toward polar residues; it reads NNHDQIQNPPTVSNP. Residues 90 to 381 form the Protein kinase domain; sequence YQIQEVVGKG…AEEALADPYF (292 aa). ATP contacts are provided by residues 96 to 104 and Lys-119; that span reads VGKGSYGVV. Catalysis depends on Asp-216, which acts as the Proton acceptor. Phosphothreonine is present on Thr-252. The short motif at 252–254 is the TXY element; that stretch reads TDY. Tyr-254 carries the phosphotyrosine modification. At Thr-257 the chain carries Phosphothreonine. The tract at residues 458-535 is disordered; the sequence is EENQGPGGRS…GGGYSARNLM (78 aa). Basic and acidic residues predominate over residues 477–501; sequence LPRERVPASKNETVEERSNDIERRT. Over residues 504–520 the composition is skewed to polar residues; it reads AVASTLDSPKASQQAEG.

This sequence belongs to the protein kinase superfamily. CMGC Ser/Thr protein kinase family. MAP kinase subfamily. In terms of assembly, interacts with MKK7. Dually phosphorylated on Thr-252 and Tyr-254, which activates the enzyme.

The enzyme catalyses L-seryl-[protein] + ATP = O-phospho-L-seryl-[protein] + ADP + H(+). It catalyses the reaction L-threonyl-[protein] + ATP = O-phospho-L-threonyl-[protein] + ADP + H(+). Its activity is regulated as follows. Activated by threonine and tyrosine phosphorylation. The chain is Mitogen-activated protein kinase 15 (MPK15) from Arabidopsis thaliana (Mouse-ear cress).